Consider the following 139-residue polypeptide: MNSDYYDYDALLKRAVSQLPEEVFKDVRFEVPHADSFVEGNRTMVKNFVDISKVIRREPQFFAKYVLKELGTAGDVEGPRLILQGKFGNYIINSKIKKFVDEYVLCPECGKPDTKIIKEGRIHFLKCMACGAMKPIKLI.

Belongs to the eIF-2-beta/eIF-5 family. In terms of assembly, heterotrimer composed of an alpha, a beta and a gamma chain.

In terms of biological role, eIF-2 functions in the early steps of protein synthesis by forming a ternary complex with GTP and initiator tRNA. The sequence is that of Translation initiation factor 2 subunit beta from Methanococcus aeolicus (strain ATCC BAA-1280 / DSM 17508 / OCM 812 / Nankai-3).